A 313-amino-acid polypeptide reads, in one-letter code: Ribosomal RNA small subunit methyltransferase H (313 aa).

Residues 35–37 (GGH), Asp55, Phe79, Asp100, and Gln107 contribute to the S-adenosyl-L-methionine site.

It belongs to the methyltransferase superfamily. RsmH family.

The protein localises to the cytoplasm. It catalyses the reaction cytidine(1402) in 16S rRNA + S-adenosyl-L-methionine = N(4)-methylcytidine(1402) in 16S rRNA + S-adenosyl-L-homocysteine + H(+). Specifically methylates the N4 position of cytidine in position 1402 (C1402) of 16S rRNA. The sequence is that of Ribosomal RNA small subunit methyltransferase H from Burkholderia orbicola (strain AU 1054).